Consider the following 238-residue polypeptide: tRNA (guanine-N(7)-)-methyltransferase (238 aa).

The S-adenosyl-L-methionine site is built by E68, E93, D120, and D143. Residue D143 is part of the active site. Residues K147, D179, and 216 to 219 each bind substrate; that span reads TKFE.

The protein belongs to the class I-like SAM-binding methyltransferase superfamily. TrmB family.

It catalyses the reaction guanosine(46) in tRNA + S-adenosyl-L-methionine = N(7)-methylguanosine(46) in tRNA + S-adenosyl-L-homocysteine. It functions in the pathway tRNA modification; N(7)-methylguanine-tRNA biosynthesis. Functionally, catalyzes the formation of N(7)-methylguanine at position 46 (m7G46) in tRNA. The sequence is that of tRNA (guanine-N(7)-)-methyltransferase from Aliivibrio salmonicida (strain LFI1238) (Vibrio salmonicida (strain LFI1238)).